Here is a 293-residue protein sequence, read N- to C-terminus: MEMTADYLRDRAWQYAQLTRLNRPIGNFLLLWPMLWGLWIAAKGLPDLKVLVVFVLGVLIMRAAGCVINDYADRDFDGHVKRTTHRPMANGRVSEREALTLFVVLCLVAFGLVLLMNPLTIALSLVAVALAATYPFMKRYTHFPQVHLGAAFGWAIPMAFAAQTGAVAPVAWLLFLSAVLWATIYDTQYAMVDRDDDLKIGVKSTAVLFGQADRAIIGVLQGVMLAVLVAAGLVVGLGAFWYLGLAAAAALFAYQQWLIRERRREDCFRAFLNNNWLGGLIFLGLLLDLHLGG.

A run of 7 helical transmembrane segments spans residues 25-45 (IGNF…AKGL), 48-68 (LKVL…GCVI), 101-121 (LFVV…PLTI), 142-162 (HFPQ…AFAA), 165-185 (GAVA…ATIY), 223-243 (VMLA…FWYL), and 271-291 (FLNN…DLHL).

This sequence belongs to the UbiA prenyltransferase family. Requires Mg(2+) as cofactor.

It localises to the cell inner membrane. It carries out the reaction all-trans-octaprenyl diphosphate + 4-hydroxybenzoate = 4-hydroxy-3-(all-trans-octaprenyl)benzoate + diphosphate. It participates in cofactor biosynthesis; ubiquinone biosynthesis. Functionally, catalyzes the prenylation of para-hydroxybenzoate (PHB) with an all-trans polyprenyl group. Mediates the second step in the final reaction sequence of ubiquinone-8 (UQ-8) biosynthesis, which is the condensation of the polyisoprenoid side chain with PHB, generating the first membrane-bound Q intermediate 3-octaprenyl-4-hydroxybenzoate. In Alkalilimnicola ehrlichii (strain ATCC BAA-1101 / DSM 17681 / MLHE-1), this protein is 4-hydroxybenzoate octaprenyltransferase.